We begin with the raw amino-acid sequence, 534 residues long: Ankyrin repeat and LEM domain-containing protein 1 (534 aa).

ANK repeat units follow at residues 4–35 (TACL…DPNL), 39–71 (DGAA…DPNA), 75–104 (EGLT…DPTL), and 108–137 (DGLR…PTQP). One can recognise an LEM domain in the interval 279-323 (HSSVPPMSDLQLLQALRALGYSPGPVTPFTRGHYLRRLQEAQASR). Residues 370 to 485 (KSSFTYLLLD…ALGLQTLTNQ (116 aa)) form the GIY-YIG domain. The Nuclear localization signal signature appears at 498–505 (PPSRRRRL).

As to quaternary structure, interacts (via LEM domain) with BANF1; the interaction may favor BANF1 dimerization. As to expression, predominantly expressed in bone marrow, spleen, thymus, colon and ovary. Expressed also to a lesser extent in lymph nodes, liver and testis.

It localises to the cytoplasm. The protein localises to the nucleus. In terms of biological role, endonuclease that probably plays a role in the DNA damage response and DNA repair. This is Ankyrin repeat and LEM domain-containing protein 1 from Mus musculus (Mouse).